Reading from the N-terminus, the 193-residue chain is Non-specific lipid transfer protein GPI-anchored 10 (193 aa).

The N-terminal stretch at 1–24 (MASSTLLITLLISLSAFFLRMVLA) is a signal peptide. Disulfide bonds link cysteine 30–cysteine 71, cysteine 40–cysteine 55, cysteine 56–cysteine 98, and cysteine 69–cysteine 107. N-linked (GlcNAc...) asparagine glycans are attached at residues asparagine 76, asparagine 87, and asparagine 103. Positions 109–140 (SSFPGEAPSDSSSVAPPPSSSTGSQISQGAKN) are disordered. Over residues 116 to 132 (PSDSSSVAPPPSSSTGS) the composition is skewed to low complexity. The N-linked (GlcNAc...) asparagine glycan is linked to asparagine 140. Serine 168 carries GPI-anchor amidated serine lipidation. The propeptide at 169–193 (SGSKSEIQLTIFALAAILPAALLLI) is removed in mature form.

The protein belongs to the plant LTP family.

Its subcellular location is the cell membrane. Functionally, probable lipid transfer protein. The protein is Non-specific lipid transfer protein GPI-anchored 10 of Arabidopsis thaliana (Mouse-ear cress).